Consider the following 565-residue polypeptide: 2-isopropylmalate synthase (565 aa).

A Pyruvate carboxyltransferase domain is found at 37–312 (PRWCSVDLRD…DPMIDLSDID (276 aa)). 4 residues coordinate Mg(2+): aspartate 46, histidine 251, histidine 253, and asparagine 287. The segment at 446–565 (EGGDPAASLE…SAVNRASRES (120 aa)) is regulatory domain.

This sequence belongs to the alpha-IPM synthase/homocitrate synthase family. LeuA type 2 subfamily. As to quaternary structure, homodimer. It depends on Mg(2+) as a cofactor.

It is found in the cytoplasm. The enzyme catalyses 3-methyl-2-oxobutanoate + acetyl-CoA + H2O = (2S)-2-isopropylmalate + CoA + H(+). It functions in the pathway amino-acid biosynthesis; L-leucine biosynthesis; L-leucine from 3-methyl-2-oxobutanoate: step 1/4. Functionally, catalyzes the condensation of the acetyl group of acetyl-CoA with 3-methyl-2-oxobutanoate (2-ketoisovalerate) to form 3-carboxy-3-hydroxy-4-methylpentanoate (2-isopropylmalate). The chain is 2-isopropylmalate synthase from Parafrankia sp. (strain EAN1pec).